Here is a 569-residue protein sequence, read N- to C-terminus: Urease subunit alpha (569 aa).

The Urease domain occupies 132–569 (GGVDTHIHFI…VPLGQRYFLF (438 aa)). Residues H137, H139, and K220 each contribute to the Ni(2+) site. Residue K220 is modified to N6-carboxylysine. H222 contacts substrate. Residues H249 and H275 each coordinate Ni(2+). H323 (proton donor) is an active-site residue. Residue D363 coordinates Ni(2+).

The protein belongs to the metallo-dependent hydrolases superfamily. Urease alpha subunit family. In terms of assembly, heterotrimer of UreA (gamma), UreB (beta) and UreC (alpha) subunits. Three heterotrimers associate to form the active enzyme. Ni cation serves as cofactor. Post-translationally, carboxylation allows a single lysine to coordinate two nickel ions.

The protein resides in the cytoplasm. The enzyme catalyses urea + 2 H2O + H(+) = hydrogencarbonate + 2 NH4(+). The protein operates within nitrogen metabolism; urea degradation; CO(2) and NH(3) from urea (urease route): step 1/1. This chain is Urease subunit alpha, found in Bacillus subtilis (strain 168).